Reading from the N-terminus, the 1175-residue chain is Chromosome partition protein Smc (1175 aa).

32–39 contacts ATP; that stretch reads PNGCGKSN. Positions 170–504 form a coiled coil; it reads VSKYKERRRE…ALKALQEKVK (335 aa). The SMC hinge domain occupies 524-625; sequence LWSRIAIEPG…YTAPTLEEAL (102 aa). 2 coiled-coil regions span residues 684 to 918 and 944 to 1022; these read DESR…FQLK and SQSI…ELLS. The disordered stretch occupies residues 807–849; sequence RQAQEATFSRRSLEARRGELSRTIETASQQARSLADEQQRAQD. The span at 817–828 shows a compositional bias: basic and acidic residues; the sequence is RSLEARRGELSR. A compositionally biased stretch (polar residues) spans 829–838; that stretch reads TIETASQQAR. Residues 840-849 show a composition bias toward basic and acidic residues; the sequence is LADEQQRAQD.

Belongs to the SMC family. As to quaternary structure, homodimer.

The protein localises to the cytoplasm. In terms of biological role, required for chromosome condensation and partitioning. This Delftia acidovorans (strain DSM 14801 / SPH-1) protein is Chromosome partition protein Smc.